The chain runs to 252 residues: Trans-aconitate 2-methyltransferase (252 aa).

Belongs to the methyltransferase superfamily. Tam family.

It localises to the cytoplasm. The enzyme catalyses trans-aconitate + S-adenosyl-L-methionine = (E)-3-(methoxycarbonyl)pent-2-enedioate + S-adenosyl-L-homocysteine. Its function is as follows. Catalyzes the S-adenosylmethionine monomethyl esterification of trans-aconitate. The polypeptide is Trans-aconitate 2-methyltransferase (Enterobacter sp. (strain 638)).